Here is a 492-residue protein sequence, read N- to C-terminus: Bifunctional purine biosynthesis protein PurH (492 aa).

The MGS-like domain occupies 1-144 (MKKAILSVSN…KNFKHVTTIV (144 aa)).

The protein belongs to the PurH family.

The enzyme catalyses (6R)-10-formyltetrahydrofolate + 5-amino-1-(5-phospho-beta-D-ribosyl)imidazole-4-carboxamide = 5-formamido-1-(5-phospho-D-ribosyl)imidazole-4-carboxamide + (6S)-5,6,7,8-tetrahydrofolate. The catalysed reaction is IMP + H2O = 5-formamido-1-(5-phospho-D-ribosyl)imidazole-4-carboxamide. Its pathway is purine metabolism; IMP biosynthesis via de novo pathway; 5-formamido-1-(5-phospho-D-ribosyl)imidazole-4-carboxamide from 5-amino-1-(5-phospho-D-ribosyl)imidazole-4-carboxamide (10-formyl THF route): step 1/1. The protein operates within purine metabolism; IMP biosynthesis via de novo pathway; IMP from 5-formamido-1-(5-phospho-D-ribosyl)imidazole-4-carboxamide: step 1/1. The sequence is that of Bifunctional purine biosynthesis protein PurH from Staphylococcus haemolyticus (strain JCSC1435).